Reading from the N-terminus, the 793-residue chain is DnaJ homolog subfamily C member 10 (793 aa).

The signal sequence occupies residues 1–32 (MGVWLSKDDYIRDLKRIILCFLIVYMAILVGT). Positions 35 to 100 (DFYSLLGVSK…DLRKKYDKYG (66 aa)) constitute a J domain. Residues 130–232 (EIITLERREF…ESLVSFAMQH (103 aa)) enclose the Thioredoxin 1 domain. A disulfide bridge connects residues C158 and C161. Trxb regions lie at residues 235–350 (STVT…LPDF) and 348–463 (PDFE…PQNF). 3 Thioredoxin domains span residues 454–553 (HVTT…IEDL), 557–662 (SVVS…SLRI), and 671–778 (VSTG…INEK). C480 and C483 are disulfide-bonded. A glycan (N-linked (GlcNAc...) asparagine) is linked at N530. 2 disulfides stabilise this stretch: C588-C591 and C700-C703. Residues 790–793 (KDEL) carry the Prevents secretion from ER motif.

Interacts with HSPA5 (via its J domain). Interacts with EDEM1.

It localises to the endoplasmic reticulum lumen. Functionally, endoplasmic reticulum disulfide reductase involved both in the correct folding of proteins and degradation of misfolded proteins. Required for efficient folding of proteins in the endoplasmic reticulum by catalyzing the removal of non-native disulfide bonds formed during the folding of proteins, such as LDLR. Also involved in endoplasmic reticulum-associated degradation (ERAD) by reducing incorrect disulfide bonds in misfolded glycoproteins recognized by EDEM1. Interaction with HSPA5 is required its activity, not for the disulfide reductase activity, but to facilitate the release of DNAJC10 from its substrate. Promotes apoptotic signaling pathway in response to endoplasmic reticulum stress. In Pongo abelii (Sumatran orangutan), this protein is DnaJ homolog subfamily C member 10 (DNAJC10).